A 49-amino-acid chain; its full sequence is MRVKITLACTECKQRNYNTTKNKKNNPDRMEMQKHCKFCKSHTLHKETK.

This sequence belongs to the bacterial ribosomal protein bL33 family.

This chain is Large ribosomal subunit protein bL33, found in Alkaliphilus metalliredigens (strain QYMF).